A 311-amino-acid polypeptide reads, in one-letter code: Malate dehydrogenase (311 aa).

Residues 7-13 (GAAGGIG) and Asp34 contribute to the NAD(+) site. Residues Arg81 and Arg87 each contribute to the substrate site. Residues Asn94 and 117-119 (ITN) each bind NAD(+). 2 residues coordinate substrate: Asn119 and Arg153. His177 functions as the Proton acceptor in the catalytic mechanism. Met227 lines the NAD(+) pocket.

The protein belongs to the LDH/MDH superfamily. MDH type 1 family. In terms of assembly, homodimer.

The enzyme catalyses (S)-malate + NAD(+) = oxaloacetate + NADH + H(+). Its function is as follows. Catalyzes the reversible oxidation of malate to oxaloacetate. The sequence is that of Malate dehydrogenase from Shewanella woodyi (strain ATCC 51908 / MS32).